Consider the following 324-residue polypeptide: Membrane protein UL8 (324 aa).

The immunoglobulin V-like domain stretch occupies residues 36–138 (ILESIIYVSG…LWYNLTVKPK (103 aa)). A helical transmembrane segment spans residues 278-298 (THYSWMLIIAIILIIFIIICL).

This sequence belongs to the RL11 family. In terms of processing, highly glycosylated.

It is found in the host cell membrane. Functionally, plays a role in the inhibition of pro-inflammatory cytokine production. This effect is mediated by the conserved Ig-like domain. The polypeptide is Membrane protein UL8 (UL8) (Homo sapiens (Human)).